The following is a 448-amino-acid chain: Exodeoxyribonuclease 7 large subunit (448 aa).

This sequence belongs to the XseA family. Heterooligomer composed of large and small subunits.

It localises to the cytoplasm. The enzyme catalyses Exonucleolytic cleavage in either 5'- to 3'- or 3'- to 5'-direction to yield nucleoside 5'-phosphates.. In terms of biological role, bidirectionally degrades single-stranded DNA into large acid-insoluble oligonucleotides, which are then degraded further into small acid-soluble oligonucleotides. This Shewanella baltica (strain OS195) protein is Exodeoxyribonuclease 7 large subunit.